The primary structure comprises 153 residues: Ribonuclease H (153 aa).

Positions 1 to 141 constitute an RNase H type-1 domain; that stretch reads MKLVEIFTDG…CDELAKAGAN (141 aa). Mg(2+) contacts are provided by Asp-9, Glu-47, Asp-69, and Asp-133.

It belongs to the RNase H family. Monomer. It depends on Mg(2+) as a cofactor.

It is found in the cytoplasm. The catalysed reaction is Endonucleolytic cleavage to 5'-phosphomonoester.. In terms of biological role, endonuclease that specifically degrades the RNA of RNA-DNA hybrids. This is Ribonuclease H from Actinobacillus pleuropneumoniae serotype 5b (strain L20).